The following is a 668-amino-acid chain: DNA ligase (668 aa).

Residues Asp-37–Asp-41, Ser-86–Met-87, and Glu-116 each bind NAD(+). The active-site N6-AMP-lysine intermediate is the Lys-118. NAD(+)-binding residues include Arg-139, Glu-173, Lys-288, and Lys-312. The Zn(2+) site is built by Cys-406, Cys-409, Cys-424, and Cys-429. Positions Ala-590–Lys-668 constitute a BRCT domain.

Belongs to the NAD-dependent DNA ligase family. LigA subfamily. Requires Mg(2+) as cofactor. The cofactor is Mn(2+).

It carries out the reaction NAD(+) + (deoxyribonucleotide)n-3'-hydroxyl + 5'-phospho-(deoxyribonucleotide)m = (deoxyribonucleotide)n+m + AMP + beta-nicotinamide D-nucleotide.. Functionally, DNA ligase that catalyzes the formation of phosphodiester linkages between 5'-phosphoryl and 3'-hydroxyl groups in double-stranded DNA using NAD as a coenzyme and as the energy source for the reaction. It is essential for DNA replication and repair of damaged DNA. The protein is DNA ligase of Lactobacillus johnsonii (strain CNCM I-12250 / La1 / NCC 533).